The following is a 125-amino-acid chain: Large ribosomal subunit protein bL17 (125 aa).

Belongs to the bacterial ribosomal protein bL17 family. Part of the 50S ribosomal subunit. Contacts protein L32.

The polypeptide is Large ribosomal subunit protein bL17 (Acinetobacter baylyi (strain ATCC 33305 / BD413 / ADP1)).